The chain runs to 690 residues: Protein arginine N-methyltransferase 7 (690 aa).

2 consecutive SAM-dependent MTase PRMT-type domains span residues 5-355 (FQDS…FSLW) and 364-690 (KEPL…EEEQ).

Belongs to the class I-like SAM-binding methyltransferase superfamily. Protein arginine N-methyltransferase family. PRMT7 subfamily.

Functionally, essential arginine methyltransferase that can both catalyze the formation of omega-N monomethylarginine (MMA) and symmetrical dimethylarginine (sDMA). Specifically mediates the symmetrical dimethylation of arginine residues in the small nuclear ribonucleoproteins SmD1 and SmD3. In Anopheles gambiae (African malaria mosquito), this protein is Protein arginine N-methyltransferase 7 (Art7).